The primary structure comprises 83 residues: Large ribosomal subunit protein bL27 (83 aa).

Belongs to the bacterial ribosomal protein bL27 family.

The sequence is that of Large ribosomal subunit protein bL27 (rpmA) from Thermotoga maritima (strain ATCC 43589 / DSM 3109 / JCM 10099 / NBRC 100826 / MSB8).